A 77-amino-acid chain; its full sequence is MKLIIFTGLVLFAIVSLIEAQAENEKPCLAQYQVCTHAPGNCCSNLVCDCYGRYKSGARIGRNCFCLQKGVIYKRED.

An N-terminal signal peptide occupies residues 1–20 (MKLIIFTGLVLFAIVSLIEA). Positions 21 to 26 (QAENEK) are excised as a propeptide.

This sequence belongs to the neurotoxin 19 (CSTX) family. 08 (U8-Lctx) subfamily. Contains 4 disulfide bonds. Expressed by the venom gland.

The protein resides in the secreted. The sequence is that of U8-lycotoxin-Ls1e from Lycosa singoriensis (Wolf spider).